The sequence spans 637 residues: ATP-dependent zinc metalloprotease FtsH (637 aa).

The Cytoplasmic portion of the chain corresponds to 1 to 6 (MNNQGR). A helical transmembrane segment spans residues 7-27 (SILAWAALFIFVILLFNVFQS). The Periplasmic segment spans residues 28–103 (DGLLGVRNNI…VVPLETRMNT (76 aa)). Residues 104–124 (FLGFLISWFPMLLLIGVWVFF) traverse the membrane as a helical segment. Over 125 to 637 (MRQMHGGGKA…TKAQKENIAS (513 aa)) the chain is Cytoplasmic. 195–202 (GPPGTGKT) is a binding site for ATP. Position 417 (histidine 417) interacts with Zn(2+). The active site involves glutamate 418. 2 residues coordinate Zn(2+): histidine 421 and aspartate 495. Residues 617-637 (DKEKLHEKTKTTKAQKENIAS) form a disordered region.

This sequence in the central section; belongs to the AAA ATPase family. In the C-terminal section; belongs to the peptidase M41 family. In terms of assembly, homohexamer. Requires Zn(2+) as cofactor.

Its subcellular location is the cell inner membrane. Acts as a processive, ATP-dependent zinc metallopeptidase for both cytoplasmic and membrane proteins. Plays a role in the quality control of integral membrane proteins. The polypeptide is ATP-dependent zinc metalloprotease FtsH (Rickettsia typhi (strain ATCC VR-144 / Wilmington)).